Here is a 78-residue protein sequence, read N- to C-terminus: Large ribosomal subunit protein bL28 (78 aa).

Positions 1-23 are disordered; the sequence is MSRVCQVSGKRVQTGNNVSHANN. Residues 11–22 are compositionally biased toward polar residues; that stretch reads RVQTGNNVSHAN.

Belongs to the bacterial ribosomal protein bL28 family.

This Xanthomonas campestris pv. campestris (strain 8004) protein is Large ribosomal subunit protein bL28.